The following is a 91-amino-acid chain: Putative defensin-like protein 145 (91 aa).

Residues 1–26 form the signal peptide; that stretch reads MNKNIIFSFTVLTLFVIFVQVTGVIG. Asparagine 35 and asparagine 68 each carry an N-linked (GlcNAc...) asparagine glycan. Cystine bridges form between cysteine 39-cysteine 84, cysteine 52-cysteine 74, cysteine 57-cysteine 78, and cysteine 61-cysteine 80.

This sequence belongs to the DEFL family.

The protein localises to the secreted. This is Putative defensin-like protein 145 (LCR2) from Arabidopsis thaliana (Mouse-ear cress).